The primary structure comprises 264 residues: Myozenin-2 (264 aa).

Arg-53 is subject to Omega-N-methylarginine. The interval 90-135 is disordered; it reads GKVDGSNLEGGSQQAPLTPPNTPDPRSPPNPDNIAPGYSGPLKEIP. Residue Ser-101 is modified to Phosphoserine. A compositionally biased stretch (pro residues) spans 106-120; it reads LTPPNTPDPRSPPNP. Residues Thr-107 and Thr-111 each carry the phosphothreonine modification. Ser-116 is subject to Phosphoserine.

It belongs to the myozenin family. As to quaternary structure, interacts via its C-terminus with spectrin repeats 3 and 4 of ACTN2. Interacts with ACTN1, LDB3, MYOT and PPP3CA.

The protein localises to the cytoplasm. The protein resides in the myofibril. Its subcellular location is the sarcomere. It localises to the z line. Functionally, myozenins may serve as intracellular binding proteins involved in linking Z line proteins such as alpha-actinin, gamma-filamin, TCAP/telethonin, LDB3/ZASP and localizing calcineurin signaling to the sarcomere. Plays an important role in the modulation of calcineurin signaling. May play a role in myofibrillogenesis. The protein is Myozenin-2 (MYOZ2) of Pongo abelii (Sumatran orangutan).